A 110-amino-acid polypeptide reads, in one-letter code: MRIEDPFQNIFGVVRIAIDKIKELEQRGQIYGLSRFLPNSIIVMKTIDYPLIVDLYIPGFTFYFQFSIIQDQQTKQIFIDDFRVVYPQPYAKQINSTANFELSEEENEDE.

This is an uncharacterized protein from Sulfolobus islandicus rod-shaped virus 1 (SIRV-1).